The chain runs to 465 residues: 3-isopropylmalate dehydratase large subunit (465 aa).

Positions 347, 407, and 410 each coordinate [4Fe-4S] cluster. The segment at 416 to 443 (DTLRPGERSASTSNRNFEGRQGPGGRTH) is disordered.

This sequence belongs to the aconitase/IPM isomerase family. LeuC type 1 subfamily. As to quaternary structure, heterodimer of LeuC and LeuD. [4Fe-4S] cluster serves as cofactor.

The catalysed reaction is (2R,3S)-3-isopropylmalate = (2S)-2-isopropylmalate. It participates in amino-acid biosynthesis; L-leucine biosynthesis; L-leucine from 3-methyl-2-oxobutanoate: step 2/4. Its function is as follows. Catalyzes the isomerization between 2-isopropylmalate and 3-isopropylmalate, via the formation of 2-isopropylmaleate. This Frankia alni (strain DSM 45986 / CECT 9034 / ACN14a) protein is 3-isopropylmalate dehydratase large subunit.